Here is a 300-residue protein sequence, read N- to C-terminus: MAKTYQCDPLIDAFLDDLWSSKGLSDNTLSAYRTDLRHFDRYLQSQGLRLRDVGQADVRAYLAYRVEQQFARTSSARLLSSLRRFYNYLLQTKQISGDPMAQIESPKLSRHLPDSLSESQVDRLLAEPNVDDPVECRDKAMLELLYATGLRVSELVGLTMEQMSLRQGLVRIIGKGGKERLVPMGEMAITEVEHYLTSARHELLGHIQSDVVFPSKRSQMMTRQTFWHRIKLYASRAGIETELSPHTLRHAFATHLLNHGADLRVVQLLLGHSDLSTTQIYTHVARARLQELHQQHHPRG.

Residues 5–90 (YQCDPLIDAF…SLRRFYNYLL (86 aa)) enclose the Core-binding (CB) domain. The Tyr recombinase domain maps to 111–294 (HLPDSLSESQ…ARARLQELHQ (184 aa)). Active-site residues include arginine 151, lysine 175, histidine 246, arginine 249, and histidine 272. Tyrosine 281 (O-(3'-phospho-DNA)-tyrosine intermediate) is an active-site residue.

This sequence belongs to the 'phage' integrase family. XerD subfamily. As to quaternary structure, forms a cyclic heterotetrameric complex composed of two molecules of XerC and two molecules of XerD.

It localises to the cytoplasm. Functionally, site-specific tyrosine recombinase, which acts by catalyzing the cutting and rejoining of the recombining DNA molecules. The XerC-XerD complex is essential to convert dimers of the bacterial chromosome into monomers to permit their segregation at cell division. It also contributes to the segregational stability of plasmids. This Shewanella oneidensis (strain ATCC 700550 / JCM 31522 / CIP 106686 / LMG 19005 / NCIMB 14063 / MR-1) protein is Tyrosine recombinase XerD.